The following is a 187-amino-acid chain: Aspartic protease inhibitor 9 (187 aa).

An N-linked (GlcNAc...) asparagine glycan is attached at Asn-19. Cystine bridges form between Cys-48/Cys-93 and Cys-142/Cys-158.

Belongs to the protease inhibitor I3 (leguminous Kunitz-type inhibitor) family. Post-translationally, glycosylated. Tubers.

Its subcellular location is the vacuole. Functionally, inhibitor of cathepsin D (aspartic protease) and trypsin (serine protease). May protect the plant by inhibiting proteases of invading organisms. The protein is Aspartic protease inhibitor 9 of Solanum tuberosum (Potato).